Consider the following 361-residue polypeptide: Chorismate synthase (361 aa).

2 residues coordinate NADP(+): R48 and R54. FMN is bound by residues 131 to 133, 243 to 244, G287, 302 to 306, and R328; these read RSS, NA, and KPTSS.

It belongs to the chorismate synthase family. Homotetramer. It depends on FMNH2 as a cofactor.

It catalyses the reaction 5-O-(1-carboxyvinyl)-3-phosphoshikimate = chorismate + phosphate. It participates in metabolic intermediate biosynthesis; chorismate biosynthesis; chorismate from D-erythrose 4-phosphate and phosphoenolpyruvate: step 7/7. Catalyzes the anti-1,4-elimination of the C-3 phosphate and the C-6 proR hydrogen from 5-enolpyruvylshikimate-3-phosphate (EPSP) to yield chorismate, which is the branch point compound that serves as the starting substrate for the three terminal pathways of aromatic amino acid biosynthesis. This reaction introduces a second double bond into the aromatic ring system. The protein is Chorismate synthase of Rhodopseudomonas palustris (strain BisA53).